A 576-amino-acid polypeptide reads, in one-letter code: Urease subunit alpha (576 aa).

Residues 132-576 (GGIDTHIHFI…LPMAQRYFLF (445 aa)) form the Urease domain. Positions 137, 139, and 220 each coordinate Ni(2+). Lys220 is modified (N6-carboxylysine). Substrate is bound at residue His222. 2 residues coordinate Ni(2+): His249 and His275. His323 serves as the catalytic Proton donor. Residue Asp363 coordinates Ni(2+).

It belongs to the metallo-dependent hydrolases superfamily. Urease alpha subunit family. Heterotrimer of UreA (gamma), UreB (beta) and UreC (alpha) subunits. Three heterotrimers associate to form the active enzyme. The cofactor is Ni cation. Carboxylation allows a single lysine to coordinate two nickel ions.

The protein localises to the cytoplasm. The enzyme catalyses urea + 2 H2O + H(+) = hydrogencarbonate + 2 NH4(+). The protein operates within nitrogen metabolism; urea degradation; CO(2) and NH(3) from urea (urease route): step 1/1. The polypeptide is Urease subunit alpha (Paenarthrobacter aurescens (strain TC1)).